Consider the following 427-residue polypeptide: Citrate synthase (427 aa).

Catalysis depends on residues histidine 306 and aspartate 363.

The protein belongs to the citrate synthase family. As to quaternary structure, homohexamer.

The enzyme catalyses oxaloacetate + acetyl-CoA + H2O = citrate + CoA + H(+). It participates in carbohydrate metabolism; tricarboxylic acid cycle; isocitrate from oxaloacetate: step 1/2. Its activity is regulated as follows. Allosterically inhibited by NADH. The sequence is that of Citrate synthase (gltA) from Salmonella typhimurium (strain LT2 / SGSC1412 / ATCC 700720).